The primary structure comprises 658 residues: ATP-dependent RNA helicase DDX3Y (658 aa).

Residues 1–10 are compositionally biased toward basic and acidic residues; that stretch reads MSHVVVKNDP. Residues 1-141 form a disordered region; the sequence is MSHVVVKNDP…DDWSKPLPPS (141 aa). Ser2 carries the N-acetylserine modification. Residues 15–34 show a composition bias toward polar residues; sequence QLANLDLNSEKQSGGASTAS. Residues 44–68 are compositionally biased toward basic and acidic residues; it reads RNREASKGFHDKDSSGWSCSKDKDA. Lys55 bears the N6-acetyllysine mark. Phosphoserine is present on residues Ser81, Ser85, and Ser89. Over residues 93–128 the composition is skewed to basic and acidic residues; that stretch reads GRFDDRGRSDYDGIGNRDRPGFGRFERSGHSRWCDK. At Arg100 the chain carries Omega-N-methylarginine. Phosphoserine is present on Ser101. Tyr103 carries the phosphotyrosine modification. Omega-N-methylarginine is present on Arg109. A phosphoserine mark is found at Ser129 and Ser181. The Q motif signature appears at 178 to 206; sequence ENFSDIDMGEIIMGNIELTRYTRPTPVQK. 198–205 lines the ATP pocket; sequence YTRPTPVQ. In terms of domain architecture, Helicase ATP-binding spans 209–401; that stretch reads IPIIKGKRDL…RDFLDEYIFL (193 aa). Residue Lys213 forms a Glycyl lysine isopeptide (Lys-Gly) (interchain with G-Cter in SUMO2) linkage. 222–229 lines the ATP pocket; that stretch reads AQTGSGKT. The DEAD box signature appears at 345–348; sequence DEAD. Positions 412–573 constitute a Helicase C-terminal domain; the sequence is NITQKVVWVE…EVPSWLENMA (162 aa). Ser454 is subject to Phosphoserine. Omega-N-methylarginine is present on Arg588. Residues Ser590 and Ser601 each carry the phosphoserine modification. Residues 597–625 form a disordered region; sequence DYRQSSGSSSSGFGASRGSSSRSGGSGYG. The segment covering 601–619 has biased composition (low complexity); that stretch reads SSGSSSSGFGASRGSSSRS. Residues Arg613 and Arg628 each carry the omega-N-methylarginine modification.

This sequence belongs to the DEAD box helicase family. DDX3/DED1 subfamily. May interact with TDRD3.

It localises to the cytoplasm. The protein localises to the nucleus. It carries out the reaction ATP + H2O = ADP + phosphate + H(+). Probable ATP-dependent RNA helicase. May play a role in spermatogenesis. This chain is ATP-dependent RNA helicase DDX3Y (DDX3Y), found in Pongo abelii (Sumatran orangutan).